The sequence spans 131 residues: MSWQTYVDDHLMCDIDGHRLTAAAIIGHDGSVWAQSSSFPQFKSDEVAAIMKDFDEPGSLAPTGLHLGSTKYMVIQGEPGAVIRGKKGSGGITVKKTSQALIIGIYDEPLTPGQCNMIVERLGDYLLEQGM.

This sequence belongs to the profilin family. Occurs in many kinds of cells as a complex with monomeric actin in a 1:1 ratio.

It localises to the cytoplasm. Its subcellular location is the cytoskeleton. In terms of biological role, binds to actin and affects the structure of the cytoskeleton. At high concentrations, profilin prevents the polymerization of actin, whereas it enhances it at low concentrations. By binding to PIP2, it inhibits the formation of IP3 and DG. This is Profilin-4 from Hevea brasiliensis (Para rubber tree).